The primary structure comprises 564 residues: Pyruvate decarboxylase (564 aa).

Pyruvate-binding residues include Asp-28 and His-115. Thiamine diphosphate-binding positions include Thr-390 and 413–415 (GSI). Asp-444 lines the Mg(2+) pocket. Thiamine diphosphate-binding positions include 445–446 (GS) and 471–476 (NDGYTI). Residues Asn-471 and Gly-473 each coordinate Mg(2+). Glu-477 contributes to the pyruvate binding site.

Belongs to the TPP enzyme family. In terms of assembly, homotetramer. The cofactor is Mg(2+). Thiamine diphosphate serves as cofactor.

The enzyme catalyses a 2-oxocarboxylate + H(+) = an aldehyde + CO2. It catalyses the reaction pyruvate + H(+) = acetaldehyde + CO2. This chain is Pyruvate decarboxylase (PDC1), found in Candida glabrata (strain ATCC 2001 / BCRC 20586 / JCM 3761 / NBRC 0622 / NRRL Y-65 / CBS 138) (Yeast).